The following is a 202-amino-acid chain: dITP/XTP pyrophosphatase (202 aa).

10–15 (TSNRHK) is a substrate binding site. Asp70 (proton acceptor) is an active-site residue. Residue Asp70 participates in Mg(2+) binding. Substrate is bound by residues Ser71, 153-156 (FGYD), Lys176, and 181-182 (HR).

This sequence belongs to the HAM1 NTPase family. Homodimer. Mg(2+) is required as a cofactor.

The catalysed reaction is XTP + H2O = XMP + diphosphate + H(+). It carries out the reaction dITP + H2O = dIMP + diphosphate + H(+). It catalyses the reaction ITP + H2O = IMP + diphosphate + H(+). Pyrophosphatase that catalyzes the hydrolysis of nucleoside triphosphates to their monophosphate derivatives, with a high preference for the non-canonical purine nucleotides XTP (xanthosine triphosphate), dITP (deoxyinosine triphosphate) and ITP. Seems to function as a house-cleaning enzyme that removes non-canonical purine nucleotides from the nucleotide pool, thus preventing their incorporation into DNA/RNA and avoiding chromosomal lesions. This chain is dITP/XTP pyrophosphatase, found in Methylacidiphilum infernorum (isolate V4) (Methylokorus infernorum (strain V4)).